Consider the following 338-residue polypeptide: MKLEPQIMAIVIGTTDISLIPGISVAGASPELTHYTPALDVEYLLLGMPKTMEVIPVTPEGIPTPALVTRAVAGEVAKLVVNAGSRITPKVPYVDLGGEPGRDFRRGPALSCEAARNILERGRALGCELGRLGCIYIGESIPGGTTTAMAILVAMGYDAWGRTSSASPNNPKELKIAVVKEGLRRVSAPLKPLEAVCEMGDPVHLAVAAIALGVSECGGVPVLAGGTQMAAAAALYKGLGGDLAKLHVATTRWIAEDKSADFMGLMEIVGVKNVYIAGVSFAGSKYEGLRAYERGAVKEGVAMGGALFYALSKGKDVLRLVEAEYERLLSAGVAGNVN.

Belongs to the UPF0284 family.

The polypeptide is UPF0284 protein PAE0372 (Pyrobaculum aerophilum (strain ATCC 51768 / DSM 7523 / JCM 9630 / CIP 104966 / NBRC 100827 / IM2)).